The primary structure comprises 201 residues: MLTAQQIEKLDWEKVAYMMPVIVQHAISGDVLMMGYMNKEALNITISSGKITFFSRSKQRLWTKGESSGHFLNLVNIYPDCDNDTLLALADPIGPTCHFGTHSCFAPAQTEWGFLYQLEKLLASRKTADPDHSYTAKLYASGTKRIAQKVGEEGLETALAAAVNNREELTNEAADLMYHLMVLLQDQELDLSCVIRRLRER.

The segment at 1–114 (MLTAQQIEKL…FAPAQTEWGF (114 aa)) is phosphoribosyl-AMP cyclohydrolase. The interval 115 to 201 (LYQLEKLLAS…SCVIRRLRER (87 aa)) is phosphoribosyl-ATP pyrophosphohydrolase.

It in the N-terminal section; belongs to the PRA-CH family. In the C-terminal section; belongs to the PRA-PH family.

The protein localises to the cytoplasm. It carries out the reaction 1-(5-phospho-beta-D-ribosyl)-ATP + H2O = 1-(5-phospho-beta-D-ribosyl)-5'-AMP + diphosphate + H(+). The enzyme catalyses 1-(5-phospho-beta-D-ribosyl)-5'-AMP + H2O = 1-(5-phospho-beta-D-ribosyl)-5-[(5-phospho-beta-D-ribosylamino)methylideneamino]imidazole-4-carboxamide. It participates in amino-acid biosynthesis; L-histidine biosynthesis; L-histidine from 5-phospho-alpha-D-ribose 1-diphosphate: step 2/9. Its pathway is amino-acid biosynthesis; L-histidine biosynthesis; L-histidine from 5-phospho-alpha-D-ribose 1-diphosphate: step 3/9. This chain is Histidine biosynthesis bifunctional protein HisIE, found in Photorhabdus laumondii subsp. laumondii (strain DSM 15139 / CIP 105565 / TT01) (Photorhabdus luminescens subsp. laumondii).